Here is an 88-residue protein sequence, read N- to C-terminus: Small ribosomal subunit protein uS15c (88 aa).

It belongs to the universal ribosomal protein uS15 family. In terms of assembly, part of the 30S ribosomal subunit.

Its subcellular location is the plastid. The protein localises to the chloroplast. This Arabis hirsuta (Hairy rock-cress) protein is Small ribosomal subunit protein uS15c (rps15).